A 360-amino-acid chain; its full sequence is DNA replication and repair protein RecF (360 aa).

Position 30–37 (30–37) interacts with ATP; sequence GHNGSGKT.

This sequence belongs to the RecF family.

The protein localises to the cytoplasm. In terms of biological role, the RecF protein is involved in DNA metabolism; it is required for DNA replication and normal SOS inducibility. RecF binds preferentially to single-stranded, linear DNA. It also seems to bind ATP. This Actinobacillus pleuropneumoniae serotype 7 (strain AP76) protein is DNA replication and repair protein RecF.